The primary structure comprises 413 residues: Arginine biosynthesis bifunctional protein ArgJ (413 aa).

Thr158, Lys184, Thr195, Glu285, Asn408, and Ser413 together coordinate substrate. Thr195 functions as the Nucleophile in the catalytic mechanism.

The protein belongs to the ArgJ family. Heterotetramer of two alpha and two beta chains.

The protein resides in the cytoplasm. The catalysed reaction is N(2)-acetyl-L-ornithine + L-glutamate = N-acetyl-L-glutamate + L-ornithine. It catalyses the reaction L-glutamate + acetyl-CoA = N-acetyl-L-glutamate + CoA + H(+). Its pathway is amino-acid biosynthesis; L-arginine biosynthesis; L-ornithine and N-acetyl-L-glutamate from L-glutamate and N(2)-acetyl-L-ornithine (cyclic): step 1/1. It functions in the pathway amino-acid biosynthesis; L-arginine biosynthesis; N(2)-acetyl-L-ornithine from L-glutamate: step 1/4. Catalyzes two activities which are involved in the cyclic version of arginine biosynthesis: the synthesis of N-acetylglutamate from glutamate and acetyl-CoA as the acetyl donor, and of ornithine by transacetylation between N(2)-acetylornithine and glutamate. This chain is Arginine biosynthesis bifunctional protein ArgJ, found in Brucella suis biovar 1 (strain 1330).